Reading from the N-terminus, the 594-residue chain is Zinc finger protein 37 (594 aa).

The disordered stretch occupies residues 1–253 (MATSEPAESD…KPEKAPGSGK (253 aa)). Phosphothreonine is present on T3. A KRAB domain is found at 3 to 74 (TSEPAESDAV…GKKASPSSLK (72 aa)). Phosphoserine is present on S9. Positions 10 to 33 (DAVRAKEWEQLEPVQRDVYKDTKL) are enriched in basic and acidic residues. The segment covering 34–46 (ENCSNPASMGNQD) has biased composition (polar residues). Positions 89–111 (QQDDEHREEKQKSQSKLTKEVTL) are enriched in basic and acidic residues. Residues 145 to 158 (KSSSRGKNSNQNSD) are compositionally biased toward polar residues. Basic and acidic residues-rich tracts occupy residues 159–172 (SLKKKPDTANDHRK) and 181–234 (VNKD…TGEK). C2H2-type zinc fingers lie at residues 255–277 (YECNHCGKVLSHKQGLLDHQRTH), 283–305 (YECNECGIAFSQKSHLVVHQRTH), 311–324 (YECEQCGKAHGHKH), 339–361 (YKCNECGKTFRHSSNLMQHLRSH), 367–389 (YECKECGKSFRYNSSLTEHVRTH), 395–417 (YECNECGKAFKYGSSLTKHMRIH), 423–445 (FECNECGKTFSKKSHLVIHQRTH), 451–473 (YKCDECGKAFGHSSSLTYHMRTH), 479–501 (FECNQCGKAFKQIEGLTQHQRVH), 507–529 (YECVECGKAFSQKSHLIVHQRTH), 535–557 (FECYECGKAFNAKSQLVIHQRSH), and 563–585 (YECIECGKAFKQNASLTKHMKIH).

The protein belongs to the krueppel C2H2-type zinc-finger protein family. Expressed in testis and brain.

Its subcellular location is the nucleus. May have a role in regulating spermiogenesis. The chain is Zinc finger protein 37 (Zfp37) from Mus musculus (Mouse).